The chain runs to 308 residues: D-alanine--D-alanine ligase (308 aa).

One can recognise an ATP-grasp domain in the interval 104–301 (KQIWQGSDLP…FDELCVAILE (198 aa)). ATP is bound at residue 130 to 185 (IAELGLPVIIKPVHEGSSVGMSKVEKAEDFAAAIEKATQHDAVVMAEKWITGREFT). Residues Asp-255, Glu-268, and Asn-270 each contribute to the Mg(2+) site.

The protein belongs to the D-alanine--D-alanine ligase family. It depends on Mg(2+) as a cofactor. Mn(2+) serves as cofactor.

The protein resides in the cytoplasm. The catalysed reaction is 2 D-alanine + ATP = D-alanyl-D-alanine + ADP + phosphate + H(+). It functions in the pathway cell wall biogenesis; peptidoglycan biosynthesis. Cell wall formation. In Acinetobacter baumannii (strain ACICU), this protein is D-alanine--D-alanine ligase.